The chain runs to 170 residues: Ribulose bisphosphate carboxylase small subunit, chloroplastic (170 aa).

Transit peptides (chloroplast) lie at residues 1–46 and 1–47; these read MAPT…GRIR and MAPT…RIRC.

The protein belongs to the RuBisCO small chain family. As to quaternary structure, heterohexadecamer of 8 large and 8 small subunits.

The protein resides in the plastid. It localises to the chloroplast. RuBisCO catalyzes two reactions: the carboxylation of D-ribulose 1,5-bisphosphate, the primary event in carbon dioxide fixation, as well as the oxidative fragmentation of the pentose substrate. Both reactions occur simultaneously and in competition at the same active site. Although the small subunit is not catalytic it is essential for maximal activity. This Zea mays (Maize) protein is Ribulose bisphosphate carboxylase small subunit, chloroplastic.